The primary structure comprises 248 residues: Tetraspanin-16 (248 aa).

Topologically, residues 1-7 (MSEIRTG) are cytoplasmic. The helical transmembrane segment at 8–28 (FLTMATIILICIGLTMTGTGL) threads the bilayer. Over 29 to 44 (YYRKTVSKCIRETDGS) the chain is Extracellular. The helical transmembrane segment at 45-65 (FVVIGLLLLVIPQFALYAICC) threads the bilayer. Over 66–69 (HSKR) the chain is Cytoplasmic. A helical membrane pass occupies residues 70-90 (MFTIYIYAMIFVSIVLGGYSL). Residues 91 to 208 (KCFIYNTTFG…MSILKAIVHQ (118 aa)) are Extracellular-facing. N-linked (GlcNAc...) asparagine glycosylation is found at N96 and N141. A helical membrane pass occupies residues 209–229 (WKYLSMFSYPALFLVCLSLAI). Topologically, residues 230–248 (SRSIMDTFDEPDDYRGYYS) are cytoplasmic.

This sequence belongs to the tetraspanin (TM4SF) family.

It is found in the membrane. Its function is as follows. May be involved in the regulation of cell differentiation. The sequence is that of Tetraspanin-16 (TET16) from Arabidopsis thaliana (Mouse-ear cress).